Consider the following 116-residue polypeptide: NADH-ubiquinone oxidoreductase chain 3 (116 aa).

3 helical membrane passes run 4 to 24 (IIFL…AAHA), 56 to 76 (FFLV…LFPL), and 88 to 108 (LIPI…FEWI).

The protein belongs to the complex I subunit 3 family.

The protein resides in the mitochondrion membrane. The catalysed reaction is a ubiquinone + NADH + 5 H(+)(in) = a ubiquinol + NAD(+) + 4 H(+)(out). Functionally, core subunit of the mitochondrial membrane respiratory chain NADH dehydrogenase (Complex I) that is believed to belong to the minimal assembly required for catalysis. Complex I functions in the transfer of electrons from NADH to the respiratory chain. The immediate electron acceptor for the enzyme is believed to be ubiquinone. The sequence is that of NADH-ubiquinone oxidoreductase chain 3 (ND3) from Strongylocentrotus purpuratus (Purple sea urchin).